The sequence spans 137 residues: Transcription antitermination protein NusB (137 aa).

It belongs to the NusB family.

In terms of biological role, involved in transcription antitermination. Required for transcription of ribosomal RNA (rRNA) genes. Binds specifically to the boxA antiterminator sequence of the ribosomal RNA (rrn) operons. The polypeptide is Transcription antitermination protein NusB (Clavibacter michiganensis subsp. michiganensis (strain NCPPB 382)).